The primary structure comprises 1228 residues: Serine/threonine-protein kinase CST20 (1228 aa).

Residues 1–18 (MSILSENNPTQTSITDPN) are compositionally biased toward polar residues. Disordered regions lie at residues 1 to 382 (MSIL…TAHN) and 405 to 468 (NSTN…HSQE). Composition is skewed to low complexity over residues 57–70 (NTTS…SLGS) and 95–123 (ESGS…NPES). The span at 148–159 (HQGDDSDNEKQY) shows a compositional bias: basic and acidic residues. Polar residues-rich tracts occupy residues 173–195 (DSYS…NNVS), 205–222 (TSSL…NENA), and 232–244 (PQVS…SFHD). A compositionally biased stretch (low complexity) spans 246-255 (SSVISSSTSV). Composition is skewed to polar residues over residues 260 to 275 (SNPT…SYKS) and 309 to 328 (DTLS…TLQG). The segment covering 347 to 367 (NTSATSRNTSGTSTSTVVKNS) has biased composition (low complexity). A compositionally biased stretch (polar residues) spans 368–382 (RSGTSKLTSTSTAHN). Over residues 437-466 (KVRGVFSSMFGKNKSTSSSSSSNSGSNSHS) the composition is skewed to low complexity. Residues 473 to 486 (ISTPFNAKHLAHVG) enclose the CRIB domain. Disordered stretches follow at residues 543 to 829 (FHFD…ALAD) and 865 to 917 (LREK…KQAA). Residues 548 to 559 (NKSSSSGWSNEN) show a composition bias toward polar residues. Over residues 568-579 (SNSGSGGGGGGA) the composition is skewed to gly residues. Residues 602–611 (ITPSQSMPTK) are compositionally biased toward polar residues. Over residues 612–626 (TESKQSENQHPHEDN) the composition is skewed to basic and acidic residues. The segment covering 627 to 640 (ATQYTPRTPTSHVQ) has biased composition (polar residues). Composition is skewed to low complexity over residues 668 to 681 (PSSQ…SQSD), 693 to 708 (ISPS…SKSL), and 734 to 747 (SIPK…SLSS). Over residues 748-759 (QLRPATNGSTTA) the composition is skewed to polar residues. A compositionally biased stretch (pro residues) spans 787 to 805 (APPPPPSASPAPPVPPAPP). The span at 809-824 (LSEQTSEIPQQRTAPS) shows a compositional bias: polar residues. Basic and acidic residues predominate over residues 865-874 (LREKNERQNR). Positions 875–890 (QQETGQNNADTASGGS) are enriched in polar residues. The 253-residue stretch at 951-1203 (YVDLVKIGQG…ADELLHDNFI (253 aa)) folds into the Protein kinase domain. ATP-binding positions include 957–965 (IGQGASGGV) and Lys-981. Asp-1071 (proton acceptor) is an active-site residue.

This sequence belongs to the protein kinase superfamily. STE Ser/Thr protein kinase family. STE20 subfamily.

It is found in the cytoplasm. Its subcellular location is the nucleus. It carries out the reaction L-seryl-[protein] + ATP = O-phospho-L-seryl-[protein] + ADP + H(+). It catalyses the reaction L-threonyl-[protein] + ATP = O-phospho-L-threonyl-[protein] + ADP + H(+). In terms of biological role, MAP4K component of the MAPK pathway required for the mating pheromone response, and the regulation of cell polarity and cell cycle. Phosphorylates histone H2B to form H2BS10ph. Required for hyphal formation and virulence. This is Serine/threonine-protein kinase CST20 (CST20) from Candida albicans (strain SC5314 / ATCC MYA-2876) (Yeast).